A 93-amino-acid polypeptide reads, in one-letter code: MSRSLKKGPFIHQGLLKKIEEMNAKNEKKVIKTWSRASTIFPQMIGHTIAVHDGRKHVPVYVTEDMVGHKLGEFALTRTYRGHDDNEKTTKRK.

Belongs to the universal ribosomal protein uS19 family.

In terms of biological role, protein S19 forms a complex with S13 that binds strongly to the 16S ribosomal RNA. This Alkaliphilus oremlandii (strain OhILAs) (Clostridium oremlandii (strain OhILAs)) protein is Small ribosomal subunit protein uS19.